Consider the following 853-residue polypeptide: Translation initiation factor IF-2 (853 aa).

Disordered stretches follow at residues 1–68 (MSDT…ASDG) and 94–265 (LEQR…DKTS). Polar residues predominate over residues 20-32 (RKTSGTVKQSFSH). Residues 94–161 (LEQRKAEEAS…ASREAVERPS (68 aa)) show a composition bias toward basic and acidic residues. Residues 163 to 176 (APRAAPAAQTPPAA) show a composition bias toward low complexity. Composition is skewed to basic and acidic residues over residues 196–219 (PARD…DAER) and 245–265 (RARE…DKTS). One can recognise a tr-type G domain in the interval 347 to 515 (PRAPIVTIMG…AISIQAEILE (169 aa)). Residues 356-363 (GHVDHGKT) form a G1 region. 356 to 363 (GHVDHGKT) is a binding site for GTP. The interval 381–385 (GITQH) is G2. The tract at residues 403–406 (DTPG) is G3. Residues 403-407 (DTPGH) and 457-460 (TKSD) contribute to the GTP site. A G4 region spans residues 457-460 (TKSD). Positions 493–495 (SAK) are G5.

This sequence belongs to the TRAFAC class translation factor GTPase superfamily. Classic translation factor GTPase family. IF-2 subfamily.

It is found in the cytoplasm. Its function is as follows. One of the essential components for the initiation of protein synthesis. Protects formylmethionyl-tRNA from spontaneous hydrolysis and promotes its binding to the 30S ribosomal subunits. Also involved in the hydrolysis of GTP during the formation of the 70S ribosomal complex. The polypeptide is Translation initiation factor IF-2 (Hyphomonas neptunium (strain ATCC 15444)).